Reading from the N-terminus, the 484-residue chain is Putative cysteine ligase BshC (484 aa).

Residues 372–435 adopt a coiled-coil conformation; it reads RAFRDRVEGL…AARDEVLARH (64 aa).

The protein belongs to the BshC family.

The sequence is that of Putative cysteine ligase BshC from Thermus thermophilus (strain ATCC BAA-163 / DSM 7039 / HB27).